A 160-amino-acid polypeptide reads, in one-letter code: SsrA-binding protein (160 aa).

Residues 132 to 160 (KEFDKRDTVRERDSNRELQRTMRNKGKEE) form a disordered region.

It belongs to the SmpB family.

The protein resides in the cytoplasm. Required for rescue of stalled ribosomes mediated by trans-translation. Binds to transfer-messenger RNA (tmRNA), required for stable association of tmRNA with ribosomes. tmRNA and SmpB together mimic tRNA shape, replacing the anticodon stem-loop with SmpB. tmRNA is encoded by the ssrA gene; the 2 termini fold to resemble tRNA(Ala) and it encodes a 'tag peptide', a short internal open reading frame. During trans-translation Ala-aminoacylated tmRNA acts like a tRNA, entering the A-site of stalled ribosomes, displacing the stalled mRNA. The ribosome then switches to translate the ORF on the tmRNA; the nascent peptide is terminated with the 'tag peptide' encoded by the tmRNA and targeted for degradation. The ribosome is freed to recommence translation, which seems to be the essential function of trans-translation. This is SsrA-binding protein from Pseudomonas entomophila (strain L48).